A 463-amino-acid chain; its full sequence is RuvB-like 2 (463 aa).

77 to 84 is a binding site for ATP; the sequence is GQPGTGKT.

Belongs to the RuvB family. Forms homohexameric rings. Can form a dodecamer with ruvbl1 made of two stacked hexameric rings. Component of the chromatin-remodeling Ino80 complex. Component of some MLL1/MLL complex.

The protein localises to the nucleus. The protein resides in the dynein axonemal particle. It carries out the reaction ATP + H2O = ADP + phosphate + H(+). Its function is as follows. Has double-stranded DNA-stimulated ATPase activity. Has ATP-dependent DNA helicase (5' to 3') activity suggesting a role in nuclear processes such as recombination and transcription. Represses gene activation mediated by beta-catenin. Proposed core component of the chromatin remodeling Ino80 complex which exhibits DNA- and nucleosome-activated ATPase activity and catalyzes ATP-dependent nucleosome sliding. Involved in the endoplasmic reticulum (ER)-associated degradation (ERAD) pathway where it negatively regulates expression of ER stress response genes. May act as a regulator of embryonic heart growth. The polypeptide is RuvB-like 2 (ruvbl2) (Danio rerio (Zebrafish)).